The primary structure comprises 450 residues: Tryptophan dimethylallyltransferase 2 (450 aa).

L-tryptophan-binding positions include 80–81 and E89; that span reads IL. 3 residues coordinate substrate: R100, K186, and Y188. 2 residues coordinate L-tryptophan: Y190 and R251. R264, K266, Y268, Q350, Y352, Y416, and Y420 together coordinate substrate.

It belongs to the tryptophan dimethylallyltransferase family. As to quaternary structure, homodimer.

It catalyses the reaction L-tryptophan + dimethylallyl diphosphate = 4-(3-methylbut-2-enyl)-L-tryptophan + diphosphate. It participates in alkaloid biosynthesis; ergot alkaloid biosynthesis. In terms of biological role, catalyzes the first step of ergot alkaloid biosynthesis. Ergot alkaloids, which are produced by endophyte fungi, can enhance plant host fitness, but also cause livestock toxicosis to host plants. The polypeptide is Tryptophan dimethylallyltransferase 2 (dmaW2) (Epichloe coenophiala (Tall fescue endophyte fungus)).